Here is a 312-residue protein sequence, read N- to C-terminus: Cytochrome f (312 aa).

Residues 1 to 28 form the signal peptide; sequence MQISKFFKFVFISVSLCGSLLFPQMANA. Residues Tyr-29, Cys-49, Cys-52, and His-53 each contribute to the heme site. A helical membrane pass occupies residues 278–298; that stretch reads VKGMIAFFFTVTVAQILLVLK.

It belongs to the cytochrome f family. In terms of assembly, the 4 large subunits of the cytochrome b6-f complex are cytochrome b6, subunit IV (17 kDa polypeptide, petD), cytochrome f and the Rieske protein, while the 4 small subunits are PetG, PetL, PetM and PetN. The complex functions as a dimer. Requires heme as cofactor.

The protein localises to the plastid. Its subcellular location is the chloroplast thylakoid membrane. Component of the cytochrome b6-f complex, which mediates electron transfer between photosystem II (PSII) and photosystem I (PSI), cyclic electron flow around PSI, and state transitions. In Emiliania huxleyi (Coccolithophore), this protein is Cytochrome f.